Consider the following 622-residue polypeptide: MRFLLLLAISITYASALSCPEVTLSQRPKHCKKECIADEDCKRNKRCMCDGECGLSCVNPIAMCHPLPNIENGFIRTAGDLRFGSNAEYGCNKGYILVGASQRRCQANKEWSSSQPVCRLQLKCGPPPEIPFAVHDGSSFSGEYDLDAEVAYNCIPGYHKFNAKGLSISKCLLNRKNVAQWFGPDLRCKARACPDPGDIENGLREGDTFEYPHHVKYSCNPGFLLVGSTSRQCSSNGEWTNEPANCKATECSRPSSPLHGKVVGSSLTYQSVVTYSCDHGYRLVGQVQRICLAEGIWGGNEPRCEEIRCSVLPTLPNGYIEGSETSFGAVAVFRCLETMTHEGASKAKCMEDGQWSAPIPRCLASCRVPHIQNGKIRDKSEGQLIASGSKVIVECNKQHEANIDERLICSNSTWSHVPVCSPLSCHNWPPRVPHARILFSKSSHGSIAKYECNNGYHPNRNNQIIKCLYGEWTKDGPPMKCLPSWCEHPSKTYGTLPGGQILLEGILGAYEFQSYIQKVEEGRAISFQCGKGNYLIGPPKATCVNGEWMPKVSPKCVSQTHPMIEGKILWDRKKRSLPGRAVREYVDDELSTHRQHSGKCGIVSGKLERMIMQHSDNGVSVC.

A signal peptide spans 1 to 16; the sequence is MRFLLLLAISITYASA. In terms of domain architecture, WAP; atypical spans 17-61; that stretch reads LSCPEVTLSQRPKHCKKECIADEDCKRNKRCMCDGECGLSCVNPI. Disulfide bonds link cysteine 19/cysteine 49, cysteine 35/cysteine 47, cysteine 41/cysteine 57, cysteine 64/cysteine 105, cysteine 91/cysteine 118, cysteine 124/cysteine 171, cysteine 154/cysteine 188, cysteine 193/cysteine 233, cysteine 219/cysteine 246, cysteine 251/cysteine 291, cysteine 277/cysteine 304, cysteine 309/cysteine 349, cysteine 335/cysteine 362, cysteine 366/cysteine 409, cysteine 395/cysteine 420, cysteine 425/cysteine 467, cysteine 452/cysteine 481, cysteine 486/cysteine 543, and cysteine 529/cysteine 556. Sushi domains are found at residues 62–120, 122–190, 191–248, 249–306, 307–364, 365–422, 423–483, and 484–558; these read AMCH…VCRL, LKCG…RCKA, RACP…NCKA, TECS…RCEE, IRCS…RCLA, SCRV…VCSP, LSCH…KCLP, and SWCE…KCVS. A glycan (N-linked (GlcNAc...) asparagine) is linked at asparagine 411. Residues 576–622 constitute a propeptide that is removed on maturation; sequence SLPGRAVREYVDDELSTHRQHSGKCGIVSGKLERMIMQHSDNGVSVC.

Post-translationally, proteolytic processing of the C-terminus is required for clustering activity but not for secretion nor traffic.

Its subcellular location is the synapse. It localises to the secreted. Its function is as follows. Scaffolding protein that is necessary to cluster acetylcholine receptors at neuromuscular junctions. The polypeptide is Protein lev-9 (lev-9) (Caenorhabditis elegans).